The chain runs to 483 residues: Low-density lipoprotein receptor-related protein 11 (483 aa).

The first 32 residues, 1-32 (MATRGGGPGPGFRHRALRGLLLLCLWLPGSRP), serve as a signal peptide directing secretion. Topologically, residues 33–433 (GEPAAPSSGV…GGEHPAPEAG (401 aa)) are extracellular. An MANSC domain is found at 85 to 172 (AVPDTIIRTQ…FAPLRGYRTY (88 aa)). 2 N-linked (GlcNAc...) asparagine glycosylation sites follow: Asn-152 and Asn-275. A PKD domain is found at 193-287 (PVSKAGKDVV…VTVLPRPYST (95 aa)). Residues 293–329 (ACSRYHFFCDSGCCIDIALACDGVRQCPDGSDEDFCQ) form the LDL-receptor class A domain. 3 disulfide bridges follow: Cys-294–Cys-306, Cys-301–Cys-319, and Cys-313–Cys-328. Residues 346 to 428 (AQPGAMGLNE…KSGQAGGEHP (83 aa)) are disordered. Composition is skewed to polar residues over residues 367 to 376 (RATTHNQPAT) and 385 to 407 (HSTQ…SSGK). Asn-403 carries N-linked (GlcNAc...) asparagine glycosylation. The segment covering 408 to 418 (NQEEGNYDLKS) has biased composition (basic and acidic residues). Residues 434-456 (AVLPLALGLAITVLLLLMVTCRL) traverse the membrane as a helical segment. Over 457–483 (RLVKQKLKKARPITSEESDYLINGMYL) the chain is Cytoplasmic. Residue Ser-474 is modified to Phosphoserine.

Belongs to the LDLR family.

Its subcellular location is the membrane. In Mus musculus (Mouse), this protein is Low-density lipoprotein receptor-related protein 11 (Lrp11).